A 244-amino-acid polypeptide reads, in one-letter code: tRNA (guanine-N(1)-)-methyltransferase (244 aa).

S-adenosyl-L-methionine contacts are provided by residues glycine 113 and 132 to 137 (IGDYVL).

Belongs to the RNA methyltransferase TrmD family. As to quaternary structure, homodimer.

It localises to the cytoplasm. It carries out the reaction guanosine(37) in tRNA + S-adenosyl-L-methionine = N(1)-methylguanosine(37) in tRNA + S-adenosyl-L-homocysteine + H(+). Its function is as follows. Specifically methylates guanosine-37 in various tRNAs. This is tRNA (guanine-N(1)-)-methyltransferase from Shouchella clausii (strain KSM-K16) (Alkalihalobacillus clausii).